Reading from the N-terminus, the 288-residue chain is Acetyl-coenzyme A carboxylase carboxyl transferase subunit beta (288 aa).

A CoA carboxyltransferase N-terminal domain is found at 34 to 288 (LFSKCPACKV…RLLRMHGGVR (255 aa)). Residues cysteine 38, cysteine 41, cysteine 56, and cysteine 59 each contribute to the Zn(2+) site. Residues 38 to 59 (CPACKVILYKNDLGLEKTCQHC) form a C4-type zinc finger.

This sequence belongs to the AccD/PCCB family. As to quaternary structure, acetyl-CoA carboxylase is a heterohexamer composed of biotin carboxyl carrier protein (AccB), biotin carboxylase (AccC) and two subunits each of ACCase subunit alpha (AccA) and ACCase subunit beta (AccD). Requires Zn(2+) as cofactor.

It is found in the cytoplasm. The enzyme catalyses N(6)-carboxybiotinyl-L-lysyl-[protein] + acetyl-CoA = N(6)-biotinyl-L-lysyl-[protein] + malonyl-CoA. It participates in lipid metabolism; malonyl-CoA biosynthesis; malonyl-CoA from acetyl-CoA: step 1/1. Functionally, component of the acetyl coenzyme A carboxylase (ACC) complex. Biotin carboxylase (BC) catalyzes the carboxylation of biotin on its carrier protein (BCCP) and then the CO(2) group is transferred by the transcarboxylase to acetyl-CoA to form malonyl-CoA. The chain is Acetyl-coenzyme A carboxylase carboxyl transferase subunit beta from Streptococcus suis (strain 98HAH33).